The following is a 714-amino-acid chain: Polyribonucleotide nucleotidyltransferase (714 aa).

Mg(2+)-binding residues include Asp490 and Asp496. The KH domain maps to 556–615; it reads PRIETMQIPTDKIREVIGSGGKVIREIVEVSGAKVDINDDGIIKIASPNGDSIKKAYDMI. The S1 motif domain occupies 625 to 693; it reads GQVYTGKVVK…DRGKVRLSMK (69 aa).

The protein belongs to the polyribonucleotide nucleotidyltransferase family. The cofactor is Mg(2+).

It is found in the cytoplasm. The enzyme catalyses RNA(n+1) + phosphate = RNA(n) + a ribonucleoside 5'-diphosphate. In terms of biological role, involved in mRNA degradation. Catalyzes the phosphorolysis of single-stranded polyribonucleotides processively in the 3'- to 5'-direction. The chain is Polyribonucleotide nucleotidyltransferase from Ruegeria pomeroyi (strain ATCC 700808 / DSM 15171 / DSS-3) (Silicibacter pomeroyi).